Consider the following 148-residue polypeptide: Fluoride-specific ion channel FluC 2 (148 aa).

Helical transmembrane passes span 23-43 (LGHL…RLAV), 61-81 (GTLA…TLIF), 92-112 (FWVL…LHTL), and 120-140 (LLGG…ALAG). The Na(+) site is built by G99 and T102.

This sequence belongs to the fluoride channel Fluc/FEX (TC 1.A.43) family.

The protein localises to the cell membrane. The catalysed reaction is fluoride(in) = fluoride(out). Na(+) is not transported, but it plays an essential structural role and its presence is essential for fluoride channel function. Functionally, fluoride-specific ion channel. Important for reducing fluoride concentration in the cell, thus reducing its toxicity. The polypeptide is Fluoride-specific ion channel FluC 2 (Rubrobacter xylanophilus (strain DSM 9941 / JCM 11954 / NBRC 16129 / PRD-1)).